A 510-amino-acid polypeptide reads, in one-letter code: Bifunctional purine biosynthesis protein PurH (510 aa).

The MGS-like domain occupies 1 to 142 (MRALISVSDK…KNFKDVLIVT (142 aa)).

The protein belongs to the PurH family.

The catalysed reaction is (6R)-10-formyltetrahydrofolate + 5-amino-1-(5-phospho-beta-D-ribosyl)imidazole-4-carboxamide = 5-formamido-1-(5-phospho-D-ribosyl)imidazole-4-carboxamide + (6S)-5,6,7,8-tetrahydrofolate. It carries out the reaction IMP + H2O = 5-formamido-1-(5-phospho-D-ribosyl)imidazole-4-carboxamide. It functions in the pathway purine metabolism; IMP biosynthesis via de novo pathway; 5-formamido-1-(5-phospho-D-ribosyl)imidazole-4-carboxamide from 5-amino-1-(5-phospho-D-ribosyl)imidazole-4-carboxamide (10-formyl THF route): step 1/1. It participates in purine metabolism; IMP biosynthesis via de novo pathway; IMP from 5-formamido-1-(5-phospho-D-ribosyl)imidazole-4-carboxamide: step 1/1. The chain is Bifunctional purine biosynthesis protein PurH from Campylobacter curvus (strain 525.92).